The sequence spans 156 residues: Small ribosomal subunit protein uS7 (156 aa).

The protein belongs to the universal ribosomal protein uS7 family. Part of the 30S ribosomal subunit. Contacts proteins S9 and S11.

In terms of biological role, one of the primary rRNA binding proteins, it binds directly to 16S rRNA where it nucleates assembly of the head domain of the 30S subunit. Is located at the subunit interface close to the decoding center, probably blocks exit of the E-site tRNA. The sequence is that of Small ribosomal subunit protein uS7 from Leifsonia xyli subsp. xyli (strain CTCB07).